The sequence spans 59 residues: Dybowskin-1CDYa (59 aa).

Residues 1 to 22 form the signal peptide; sequence MFTLKKSLLLLFFLGTINFSLC. A propeptide spanning residues 23 to 44 is cleaved from the precursor; sequence EEERNAEEERRDYPEERDVEVE.

It belongs to the frog skin active peptide (FSAP) family. Brevinin subfamily. In terms of tissue distribution, expressed by the skin glands.

The protein localises to the secreted. Antimicrobial peptide. Has activity against the Gram-positive bacterium S.aureus (MIC=6 uM) and the Gram-negative bacterium E.coli (MIC=3 uM). Lacks hemolytic activity against human erythrocytes. The sequence is that of Dybowskin-1CDYa from Rana dybowskii (Dybovsky's frog).